The following is a 61-amino-acid chain: MKTIVLLFVLVLVFALLVKMGMVEAEHGCPDNEDECHEHCKSIGKSGGYCVGPHKQTCRCN.

A signal peptide spans 1-25 (MKTIVLLFVLVLVFALLVKMGMVEA). 3 disulfides stabilise this stretch: C29/C50, C36/C58, and C40/C60.

This sequence belongs to the invertebrate defensin family. Type 2 subfamily. In terms of tissue distribution, highly expressed in non-venom gland (hemolymph) and moderately expressed in venom gland.

Its subcellular location is the secreted. Its function is as follows. Antibacterial peptide active against Gram-positive bacteria, but not on Gram-negative bacteria. Also has weak blocking activity on Kv1.1/KCNA1, Kv1.2/KCNA2, Kv1.3/KCNA3, KCa3.1/KCNN4/IK, KCa2.3/KCNN3/SK3 and Kv11.1/KCNH2/ERG1 channels (tested at 1 uM). It inhibits potassium channel current by interacting with the pore region. The sequence is that of Defensin BmKDfsin1 from Olivierus martensii (Manchurian scorpion).